Here is an 859-residue protein sequence, read N- to C-terminus: Outer membrane usher protein AfaC (859 aa).

An N-terminal signal peptide occupies residues 1-28 (MRDTSSGRMRTGVTGLALAVMVACVMFR).

Belongs to the fimbrial export usher family.

It localises to the cell outer membrane. In terms of biological role, involved in the export and assembly of AFA-III afimbrial adhesin subunits across the outer membrane. This chain is Outer membrane usher protein AfaC (afaC), found in Escherichia coli.